A 279-amino-acid polypeptide reads, in one-letter code: MVKYQYEFPLDKAGKAGAVKPYRGGKNDFVTPVSNLSGVAEILTNAALKATEAYSQLGQDRLGAVLISKVKGWAYADREGTLFIEESDNNNVWTTTAAVNVAAGVLTATDWVYLSKRYYRFRYVNGNLQQSEFVLYQSVGAGEMDVRVNEKTPLQIDFAENQTHDGRLKVEARKTFDFVFHENAESASEGAALPVDGAAHLLVEVYGTAEMSEVKFWGKSVSGQKLPIRGVKTDDATTASSTLGKAEAWAFDIKGFKEIIMEIISITGGTLSVKGTAVS.

The protein to B.subtilis YqxG/YqdC.

Functionally, not known; does not seem to be involved in host cell lysis. In Bacillus subtilis (strain 168), this protein is Phage-like element PBSX protein XepA (xepA).